The primary structure comprises 414 residues: 3-phosphoshikimate 1-carboxyvinyltransferase (414 aa).

3 residues coordinate 3-phosphoshikimate: Lys-20, Ser-21, and Arg-25. Lys-20 contacts phosphoenolpyruvate. Arg-113 provides a ligand contact to phosphoenolpyruvate. Residues Ser-154, Ser-155, Gln-156, Ser-181, Asp-296, and Lys-323 each coordinate 3-phosphoshikimate. Gln-156 serves as a coordination point for phosphoenolpyruvate. The active-site Proton acceptor is the Asp-296. 3 residues coordinate phosphoenolpyruvate: Arg-327, Arg-371, and Lys-395.

It belongs to the EPSP synthase family. Monomer.

The protein resides in the cytoplasm. It carries out the reaction 3-phosphoshikimate + phosphoenolpyruvate = 5-O-(1-carboxyvinyl)-3-phosphoshikimate + phosphate. The protein operates within metabolic intermediate biosynthesis; chorismate biosynthesis. Its function is as follows. Catalyzes the transfer of the enolpyruvyl moiety of phosphoenolpyruvate (PEP) to the 5-hydroxyl of shikimate-3-phosphate (S3P) to produce enolpyruvyl shikimate-3-phosphate and inorganic phosphate. This Saccharolobus solfataricus (strain ATCC 35092 / DSM 1617 / JCM 11322 / P2) (Sulfolobus solfataricus) protein is 3-phosphoshikimate 1-carboxyvinyltransferase.